We begin with the raw amino-acid sequence, 302 residues long: Hydra actinoporin-like toxin 4 (302 aa).

The signal sequence occupies residues 1–17 (MLLFKLIVCFFFIFAIG). Residues 22 to 93 (KKDETSGENE…PAPKQTTTKK (72 aa)) form a disordered region. The segment covering 60 to 75 (KPPAAKPPAASKITKP) has biased composition (low complexity). Residues 76 to 86 (QVPPQKKPPAP) are compositionally biased toward pro residues. The Cell attachment site signature appears at 274 to 276 (KAG).

This sequence belongs to the actinoporin family. HALT subfamily. Octamer or nonamer in membranes. Monomer in the soluble state. In vitro, interacts with folate receptor alpha (of target organism).

It localises to the nematocyst. Its subcellular location is the secreted. The protein resides in the target cell membrane. Functionally, pore-forming protein that forms hydrophilic pores and causes cytolysis. Compared to equinatoxin-2 (AC P61914), it reveals lower cytolysis activity (5-12-fold difference, tested on erythrocytes), a larger pore size (probably 2-3 nm) and different affinity to membrane lipids (100-fold lower affinity to sphingomyelin). Binds to sulfatides. Shows cytolytic activity on HeLa cells, with a different potency than its paralogs (from most potent to less potent: HALT-4&gt;HALT-6~HALT-1&gt;HALT-3&gt;HALT-7&gt;HALT-2). This recombinant protein has the highest cytolytic activity compared to other rHALT proteins, probably due to its longer N-terminal sequence that may penetrate the lipid bilayer more effectively. Pore formation is a multi-step process that involves specific recognition of membrane lipid by a protein aromatic residues rich region, firm binding to the membrane (mainly driven by hydrophobic interactions) accompanied by the transfer of the N-terminal region to the lipid-water interface and finally pore formation after oligomerization of monomers. In vitro, binds to the folate receptor alpha (FOLR1), a GPI-anchored membrane protein that plays a major role in the uptake of folate/folic acid into cells via endocytosis, suggesting a possible involvement of this receptor in the mechanism of HALT-1-induced cell lysis. In vivo, does not cause visible paralysis in larvae of the blowfly Sarcophaga faculata, the most common arthropod prey of Hydra. The chain is Hydra actinoporin-like toxin 4 from Hydra vulgaris (Hydra).